The chain runs to 143 residues: Large ribosomal subunit protein uL11 (143 aa).

Belongs to the universal ribosomal protein uL11 family. Part of the ribosomal stalk of the 50S ribosomal subunit. Interacts with L10 and the large rRNA to form the base of the stalk. L10 forms an elongated spine to which L12 dimers bind in a sequential fashion forming a multimeric L10(L12)X complex. Post-translationally, one or more lysine residues are methylated.

Functionally, forms part of the ribosomal stalk which helps the ribosome interact with GTP-bound translation factors. This chain is Large ribosomal subunit protein uL11, found in Methylococcus capsulatus (strain ATCC 33009 / NCIMB 11132 / Bath).